We begin with the raw amino-acid sequence, 177 residues long: Small ribosomal subunit protein bS16 (177 aa).

The segment at 80–177 (GIIAMPANGS…AAEAPKEEAK (98 aa)) is disordered. Over residues 107–122 (AAPAAAPKAEAAPAAE) the composition is skewed to low complexity.

It belongs to the bacterial ribosomal protein bS16 family.

This Pelagibacter ubique (strain HTCC1062) protein is Small ribosomal subunit protein bS16.